The following is a 142-amino-acid chain: Large ribosomal subunit protein uL11 (142 aa).

This sequence belongs to the universal ribosomal protein uL11 family. In terms of assembly, part of the ribosomal stalk of the 50S ribosomal subunit. Interacts with L10 and the large rRNA to form the base of the stalk. L10 forms an elongated spine to which L12 dimers bind in a sequential fashion forming a multimeric L10(L12)X complex. One or more lysine residues are methylated.

Forms part of the ribosomal stalk which helps the ribosome interact with GTP-bound translation factors. The polypeptide is Large ribosomal subunit protein uL11 (Haemophilus influenzae (strain 86-028NP)).